We begin with the raw amino-acid sequence, 430 residues long: MGPRRLLIVALGLSLCGPLLSSRVPMSQPESERTDATVNPRSFFLRNPSENTFELVPLGDEEEEEKNESVLLEGRAVYLNISLPPHTPPPPFISEDASGYLTSPWLTLFMPSVYTIVFIVSLPLNVLAIAVFVLRMKVKKPAVVYMLHLAMADVLFVSVLPFKISYYFSGTDWQFGSGMCRFATAAFYGNMYASIMLMTVISIDRFLAVVYPIQSLSWRTLGRANFTCVVIWVMAIMGVVPLLLKEQTTRVPGLNITTCHDVLSENLMQGFYSYYFSAFSAIFFLVPLIVSTVCYTSIIRCLSSSAVANRSKKSRALFLSAAVFCIFIVCFGPTNVLLIVHYLFLSDSPGTEAAYFAYLLCVCVSSVSCCIDPLIYYYASSECQRHLYSILCCKESSDPNSCNSTGQLMPSKMDTCSSHLNNSIYKKLLA.

The signal sequence occupies residues 1 to 21 (MGPRRLLIVALGLSLCGPLLS). The propeptide at 22–41 (SRVPMSQPESERTDATVNPR) is removed for receptor activation. Residues 42-107 (SFFLRNPSEN…SGYLTSPWLT (66 aa)) lie on the Extracellular side of the membrane. Residues N67 and N80 are each glycosylated (N-linked (GlcNAc...) asparagine). Residues 108-133 (LFMPSVYTIVFIVSLPLNVLAIAVFV) form a helical membrane-spanning segment. Over 134-142 (LRMKVKKPA) the chain is Cytoplasmic. A helical membrane pass occupies residues 143-162 (VVYMLHLAMADVLFVSVLPF). Topologically, residues 163–181 (KISYYFSGTDWQFGSGMCR) are extracellular. Cysteines 180 and 259 form a disulfide. The chain crosses the membrane as a helical span at residues 182 to 203 (FATAAFYGNMYASIMLMTVISI). Over 204 to 223 (DRFLAVVYPIQSLSWRTLGR) the chain is Cytoplasmic. The chain crosses the membrane as a helical span at residues 224–244 (ANFTCVVIWVMAIMGVVPLLL). Over 245 to 273 (KEQTTRVPGLNITTCHDVLSENLMQGFYS) the chain is Extracellular. The N-linked (GlcNAc...) asparagine glycan is linked to N255. A helical transmembrane segment spans residues 274–293 (YYFSAFSAIFFLVPLIVSTV). At 294–316 (CYTSIIRCLSSSAVANRSKKSRA) the chain is on the cytoplasmic side. The chain crosses the membrane as a helical span at residues 317–339 (LFLSAAVFCIFIVCFGPTNVLLI). At 340–354 (VHYLFLSDSPGTEAA) the chain is on the extracellular side. Residues 355–379 (YFAYLLCVCVSSVSCCIDPLIYYYA) traverse the membrane as a helical segment. Residues 380-430 (SSECQRHLYSILCCKESSDPNSCNSTGQLMPSKMDTCSSHLNNSIYKKLLA) are Cytoplasmic-facing. S423 bears the Phosphoserine mark.

This sequence belongs to the G-protein coupled receptor 1 family. In terms of processing, proteolytic cleavage by thrombin generates a new N-terminus that functions as a tethered ligand. Also proteolytically cleaved by cathepsin CTSG. Phosphorylated in the C-terminal tail; probably mediating desensitization prior to the uncoupling and internalization of the receptor.

The protein resides in the cell membrane. High affinity receptor that binds the activated thrombin, leading to calcium release from intracellular stores. The thrombin-activated receptor signaling pathway is mediated through PTX-insensitive G proteins, activation of phospholipase C resulting in the production of 1D-myo-inositol 1,4,5-trisphosphate (InsP3) which binds to InsP3 receptors causing calcium release from the stores. In astrocytes, the calcium released into the cytosol allows the Ca(2+)-dependent release of L-glutamate into the synaptic cleft through BEST1, that targets the neuronal postsynaptic GRIN2A/NMDAR receptor resulting in the synaptic plasticity regulation. May play a role in platelets activation and in vascular development. Mediates up-regulation of pro-inflammatory cytokines, such as MCP-1/CCL2 and IL6, triggered by coagulation factor Xa (F10) in cardiac fibroblasts and umbilical vein endothelial cells. The sequence is that of Proteinase-activated receptor 1 from Mus musculus (Mouse).